Reading from the N-terminus, the 82-residue chain is Large ribosomal subunit protein bL27c (82 aa).

Positions 1–22 are disordered; that stretch reads MAHKKGAGSTKNGRDSNSKRLG.

This sequence belongs to the bacterial ribosomal protein bL27 family.

The protein resides in the plastid. It is found in the chloroplast. The protein is Large ribosomal subunit protein bL27c (rpl27) of Chrysotila carterae (Marine alga).